Here is a 247-residue protein sequence, read N- to C-terminus: ATP synthase subunit a, chloroplastic (247 aa).

The next 5 membrane-spanning stretches (helical) occupy residues 38–58 (QVLI…VIAV), 95–115 (VPFI…GALL), 134–154 (INTT…AGLS), 199–219 (LVVV…VMFL), and 220–240 (GLFT…AYIG).

This sequence belongs to the ATPase A chain family. As to quaternary structure, F-type ATPases have 2 components, CF(1) - the catalytic core - and CF(0) - the membrane proton channel. CF(1) has five subunits: alpha(3), beta(3), gamma(1), delta(1), epsilon(1). CF(0) has four main subunits: a, b, b' and c.

The protein localises to the plastid. It localises to the chloroplast thylakoid membrane. Its function is as follows. Key component of the proton channel; it plays a direct role in the translocation of protons across the membrane. The protein is ATP synthase subunit a, chloroplastic of Agrostis stolonifera (Creeping bentgrass).